The chain runs to 323 residues: Cyclin-H (323 aa).

Position 5 is a phosphoserine; by CDK8 (Ser5). At Ser132 the chain carries Phosphoserine. Residues 299–323 (DDDYVPKKSKHEEEEWTDDDLVESL) form a disordered region. The segment covering 302-311 (YVPKKSKHEE) has biased composition (basic and acidic residues). Acidic residues predominate over residues 312–323 (EEWTDDDLVESL). Thr315 bears the Phosphothreonine mark. At Ser322 the chain carries Phosphoserine.

It belongs to the cyclin family. Cyclin C subfamily. In terms of assembly, associates primarily with CDK7 and MAT1 to form the CAK complex. CAK can further associate with the core-TFIIH to form the TFIIH basal transcription factor.

Its subcellular location is the nucleus. Its function is as follows. Regulates CDK7, the catalytic subunit of the CDK-activating kinase (CAK) enzymatic complex. CAK activates the cyclin-associated kinases CDK1, CDK2, CDK4 and CDK6 by threonine phosphorylation. CAK complexed to the core-TFIIH basal transcription factor activates RNA polymerase II by serine phosphorylation of the repetitive C-terminal domain (CTD) of its large subunit (POLR2A), allowing its escape from the promoter and elongation of the transcripts. Involved in cell cycle control and in RNA transcription by RNA polymerase II. Its expression and activity are constant throughout the cell cycle. The polypeptide is Cyclin-H (CCNH) (Macaca fascicularis (Crab-eating macaque)).